The chain runs to 233 residues: MFRIIKWLIALPVGIFIFFNAYVYGNIITYRAVAPHRTAFMSMRMKQFEQEGRDVALDYRWMPYKRISTNLKKALIASEDARFAGHGGFDWGGIQNAIRRNRNSGKVKAGGSTISQQLAKNLFLNESRSYIRKGEEAAITAMMEAVTDKDRIFELYLNSIEWHYGVFGAEAASRYFYQIPAAKLTKQQAAKLTARVPAPLYYADHPKSKRLRNKTNIVLKRMGSAELPESDTD.

The chain crosses the membrane as a helical span at residues 8 to 28 (LIALPVGIFIFFNAYVYGNII).

It belongs to the glycosyltransferase 51 family.

It localises to the cell inner membrane. The enzyme catalyses [GlcNAc-(1-&gt;4)-Mur2Ac(oyl-L-Ala-gamma-D-Glu-L-Lys-D-Ala-D-Ala)](n)-di-trans,octa-cis-undecaprenyl diphosphate + beta-D-GlcNAc-(1-&gt;4)-Mur2Ac(oyl-L-Ala-gamma-D-Glu-L-Lys-D-Ala-D-Ala)-di-trans,octa-cis-undecaprenyl diphosphate = [GlcNAc-(1-&gt;4)-Mur2Ac(oyl-L-Ala-gamma-D-Glu-L-Lys-D-Ala-D-Ala)](n+1)-di-trans,octa-cis-undecaprenyl diphosphate + di-trans,octa-cis-undecaprenyl diphosphate + H(+). The protein operates within cell wall biogenesis; peptidoglycan biosynthesis. Its function is as follows. Peptidoglycan polymerase that catalyzes glycan chain elongation from lipid-linked precursors. This is Biosynthetic peptidoglycan transglycosylase from Neisseria meningitidis serogroup B (strain ATCC BAA-335 / MC58).